A 227-amino-acid chain; its full sequence is Ribonuclease HII (227 aa).

Residues 1–210 (MKLAGIDEAG…LKKIEEKLAK (210 aa)) enclose the RNase H type-2 domain. Positions 7, 8, and 105 each coordinate a divalent metal cation.

The protein belongs to the RNase HII family. It depends on Mn(2+) as a cofactor. Mg(2+) serves as cofactor.

The protein localises to the cytoplasm. It carries out the reaction Endonucleolytic cleavage to 5'-phosphomonoester.. Endonuclease that specifically degrades the RNA of RNA-DNA hybrids. The polypeptide is Ribonuclease HII (Thermococcus onnurineus (strain NA1)).